The sequence spans 99 residues: Mitochondrial import receptor subunit TOM9-2 (99 aa).

At 2–51 (AAKRIGAGKSGGGDPNILARISNSEIVSQGRRAAGDAVEVSKKLLRSTGK) the chain is on the cytoplasmic side. Residues 52–69 (AAWIAGTTFLILVVPLII) form a helical membrane-spanning segment. Residues 70–99 (EMDREAQINEIELQQASLLGAPPSPMQRGL) lie on the Mitochondrial intermembrane side of the membrane.

This sequence belongs to the Tom22 family. As to quaternary structure, forms part of the preprotein translocase complex of the outer mitochondrial membrane (TOM complex) which consists of at least 6 different proteins (TOM5, TOM6, TOM7, TOM20, TOM22/TOM9 and TOM40). In terms of tissue distribution, expressed in young cotyledons, roots, flowers and leaves.

The protein localises to the mitochondrion outer membrane. Its function is as follows. Central component of the receptor complex responsible for the recognition and translocation of cytosolically synthesized mitochondrial preproteins. Together with TOM20 functions as the transit peptide receptor at the surface of the mitochondrion outer membrane and facilitates the movement of preproteins into the translocation pore. The chain is Mitochondrial import receptor subunit TOM9-2 (TOM9-2) from Arabidopsis thaliana (Mouse-ear cress).